The chain runs to 218 residues: Probable 2-aminoethanethiol dioxygenase (218 aa).

Requires Fe cation as cofactor.

The enzyme catalyses cysteamine + O2 = hypotaurine + H(+). The sequence is that of Probable 2-aminoethanethiol dioxygenase (ado-1) from Dictyostelium discoideum (Social amoeba).